The primary structure comprises 927 residues: MKIKDTLNLGKTKFKMRGNLPVREAEWQKQWRENKLYEQRLKLNEGKPRFDLHDGPPFANGNIHMGHALNKISKDIIVRYKNMNGYYAPYVPGWDTHGLPVEQQLAKKGVDRKTMDRAKYRELCRQYAEEQVQKQMTDFKRLGVMADWDHPYITLQHDFEAQEIRVFGEMFKKGYIYKGKKPVYWSWSSESTLAEAEVEYKDVEANSIFVAFPVTDGKGIIDPKDTYFVIWTTTPWTIPANEAICVNPKFDYSVVQVGDKRYVVASGLLDKVAEEIGWDDYKVVQTVKGADMEYMKAKHPIYDKESLVIEGFHVTLDDGTGLVHTAPGFGEDDFNVGQRYNLPIFSPVDAHGCYTDEVPELKGMFYQDVDKLMVQKLKDAGALLKLKIFTHSYPHDWRTKKPVIFRATTQWFASIAPFRDQILDQIEKASFIPSWGKTRLYNMIKDRGDWVISRQRAWGVPLPIFYAEDGTPIVTPETIEHIAKIFEKEGSNAWYTHTAKELLPEGFTSEHSPNGEFTKEKDILDVWFDSGSSWSGVMEKRDGLHYPADLYLEGSDQYRGWFNSSLITSVAVTGQAPYKQVLSQGFVLDDKGHKMSKSLGNVISPNDVIKKMGAEIIRLWVAQADTTSDVAVSMGILQQSAESYRKIRNTFRYMLANTSDFDPKENRVAYDDLRSVDQYMEVKLNDLIKECLAAYDKFDFTTVFKKVFNFISNDLSAFYLDFAKDVLYIEVENSHARRSMQTVIYDAAVKLAKILTPILPHTMEEIWGFLKEDEDYVQLANMPEVENYANHDELLENWAKFMKLRDDVLKALEDARNKKLIGKSFEAAVTIYPDKETKAMLDELDADFREILIVSKLTISDDEAPVDAEQLANAAVVVKHAEGEVCPRCRMIRTDIGADPKLPMLCGRCAEIVEANYPEVVQEGLEK.

Positions 57 to 67 (PFANGNIHMGH) match the 'HIGH' region motif. Position 553 (glutamate 553) interacts with L-isoleucyl-5'-AMP. The 'KMSKS' region signature appears at 594 to 598 (KMSKS). An ATP-binding site is contributed by lysine 597. 4 residues coordinate Zn(2+): cysteine 886, cysteine 889, cysteine 906, and cysteine 909.

This sequence belongs to the class-I aminoacyl-tRNA synthetase family. IleS type 1 subfamily. Monomer. Zn(2+) is required as a cofactor.

Its subcellular location is the cytoplasm. The catalysed reaction is tRNA(Ile) + L-isoleucine + ATP = L-isoleucyl-tRNA(Ile) + AMP + diphosphate. Its function is as follows. Catalyzes the attachment of isoleucine to tRNA(Ile). As IleRS can inadvertently accommodate and process structurally similar amino acids such as valine, to avoid such errors it has two additional distinct tRNA(Ile)-dependent editing activities. One activity is designated as 'pretransfer' editing and involves the hydrolysis of activated Val-AMP. The other activity is designated 'posttransfer' editing and involves deacylation of mischarged Val-tRNA(Ile). The chain is Isoleucine--tRNA ligase from Lactobacillus helveticus (strain DPC 4571).